The primary structure comprises 439 residues: UDP-N-acetylglucosamine--peptide N-acetylglucosaminyltransferase stabilizing protein GtfB (439 aa).

It belongs to the GtfB family. Interacts with glycosyltransferase GtfA (Gtf2); probably forms a heterotetramer with 2 subunits each of GtfA and GtfB. Part of the accessory SecA2/SecY2 protein translocation apparatus.

The protein resides in the cell membrane. Its pathway is protein modification; protein glycosylation. In terms of biological role, required for the polymorphic O-glycosylation of the serine-rich repeat protein Fap1. A stabilizing protein that is part of the accessory SecA2/SecY2 system specifically required to export Fap1, a serine-rich fimbrial adhesin encoded upstream in the same operon. The GtfA-GtfB (Gtf1-Gtf2 in this bacteria) complex adds GlcNAc from UDP-GlcNAc to Fap1, attaching the first sugar residue. Cannot use not UDP-Glc as substrate. Stabilizes the glycosylation activity of GtfA, causing it to partially localize to the cellular membrane where it is more protease resistant. The chain is UDP-N-acetylglucosamine--peptide N-acetylglucosaminyltransferase stabilizing protein GtfB from Streptococcus parasanguinis.